We begin with the raw amino-acid sequence, 193 residues long: Acyl carrier protein phosphodiesterase (193 aa).

The protein belongs to the AcpH family.

The enzyme catalyses holo-[ACP] + H2O = apo-[ACP] + (R)-4'-phosphopantetheine + H(+). Converts holo-ACP to apo-ACP by hydrolytic cleavage of the phosphopantetheine prosthetic group from ACP. This is Acyl carrier protein phosphodiesterase from Yersinia enterocolitica serotype O:8 / biotype 1B (strain NCTC 13174 / 8081).